Consider the following 215-residue polypeptide: 3-demethoxyubiquinol 3-hydroxylase (215 aa).

The Fe cation site is built by Glu-64, Glu-94, His-97, Glu-146, Glu-178, and His-181.

This sequence belongs to the COQ7 family. It depends on Fe cation as a cofactor.

The protein resides in the cell membrane. It carries out the reaction a 5-methoxy-2-methyl-3-(all-trans-polyprenyl)benzene-1,4-diol + AH2 + O2 = a 3-demethylubiquinol + A + H2O. It participates in cofactor biosynthesis; ubiquinone biosynthesis. In terms of biological role, catalyzes the hydroxylation of 2-nonaprenyl-3-methyl-6-methoxy-1,4-benzoquinol during ubiquinone biosynthesis. The sequence is that of 3-demethoxyubiquinol 3-hydroxylase from Stutzerimonas stutzeri (strain A1501) (Pseudomonas stutzeri).